The following is a 122-amino-acid chain: Small ribosomal subunit protein uS13 (122 aa).

The interval 95–122 (GLPVRGQRTHTNARTRKGPAKSIAGKKK) is disordered.

It belongs to the universal ribosomal protein uS13 family. In terms of assembly, part of the 30S ribosomal subunit. Forms a loose heterodimer with protein S19. Forms two bridges to the 50S subunit in the 70S ribosome.

In terms of biological role, located at the top of the head of the 30S subunit, it contacts several helices of the 16S rRNA. In the 70S ribosome it contacts the 23S rRNA (bridge B1a) and protein L5 of the 50S subunit (bridge B1b), connecting the 2 subunits; these bridges are implicated in subunit movement. Contacts the tRNAs in the A and P-sites. In Rhodopseudomonas palustris (strain BisB18), this protein is Small ribosomal subunit protein uS13.